Consider the following 227-residue polypeptide: Phosphoribosylformylglycinamidine synthase subunit PurQ (227 aa).

In terms of domain architecture, Glutamine amidotransferase type-1 spans 2–226 (KFAVIQFPGS…VKAWKEEQVN (225 aa)). Cys86 functions as the Nucleophile in the catalytic mechanism. Catalysis depends on residues His195 and Glu197.

In terms of assembly, part of the FGAM synthase complex composed of 1 PurL, 1 PurQ and 2 PurS subunits.

Its subcellular location is the cytoplasm. It catalyses the reaction N(2)-formyl-N(1)-(5-phospho-beta-D-ribosyl)glycinamide + L-glutamine + ATP + H2O = 2-formamido-N(1)-(5-O-phospho-beta-D-ribosyl)acetamidine + L-glutamate + ADP + phosphate + H(+). It carries out the reaction L-glutamine + H2O = L-glutamate + NH4(+). It participates in purine metabolism; IMP biosynthesis via de novo pathway; 5-amino-1-(5-phospho-D-ribosyl)imidazole from N(2)-formyl-N(1)-(5-phospho-D-ribosyl)glycinamide: step 1/2. Its function is as follows. Part of the phosphoribosylformylglycinamidine synthase complex involved in the purines biosynthetic pathway. Catalyzes the ATP-dependent conversion of formylglycinamide ribonucleotide (FGAR) and glutamine to yield formylglycinamidine ribonucleotide (FGAM) and glutamate. The FGAM synthase complex is composed of three subunits. PurQ produces an ammonia molecule by converting glutamine to glutamate. PurL transfers the ammonia molecule to FGAR to form FGAM in an ATP-dependent manner. PurS interacts with PurQ and PurL and is thought to assist in the transfer of the ammonia molecule from PurQ to PurL. This chain is Phosphoribosylformylglycinamidine synthase subunit PurQ, found in Listeria monocytogenes serovar 1/2a (strain ATCC BAA-679 / EGD-e).